Consider the following 446-residue polypeptide: Tol-Pal system protein TolB (446 aa).

The first 24 residues, 1–24, serve as a signal peptide directing secretion; it reads MKRAFLSALSVGLAALFLTGPAQA.

Belongs to the TolB family. As to quaternary structure, the Tol-Pal system is composed of five core proteins: the inner membrane proteins TolA, TolQ and TolR, the periplasmic protein TolB and the outer membrane protein Pal. They form a network linking the inner and outer membranes and the peptidoglycan layer.

Its subcellular location is the periplasm. Its function is as follows. Part of the Tol-Pal system, which plays a role in outer membrane invagination during cell division and is important for maintaining outer membrane integrity. In Dinoroseobacter shibae (strain DSM 16493 / NCIMB 14021 / DFL 12), this protein is Tol-Pal system protein TolB.